Consider the following 497-residue polypeptide: Lysine--tRNA ligase (497 aa).

Mg(2+) is bound by residues Glu-409 and Glu-416.

This sequence belongs to the class-II aminoacyl-tRNA synthetase family. As to quaternary structure, homodimer. It depends on Mg(2+) as a cofactor.

The protein resides in the cytoplasm. It carries out the reaction tRNA(Lys) + L-lysine + ATP = L-lysyl-tRNA(Lys) + AMP + diphosphate. This chain is Lysine--tRNA ligase, found in Streptococcus pyogenes serotype M3 (strain ATCC BAA-595 / MGAS315).